The primary structure comprises 743 residues: Phosphoribosylformylglycinamidine synthase subunit PurL (743 aa).

His50 is an active-site residue. ATP is bound by residues Tyr53 and Lys92. Position 94 (Glu94) interacts with Mg(2+). Substrate contacts are provided by residues 95–98 (SHNH) and Arg117. His96 serves as the catalytic Proton acceptor. Asp118 lines the Mg(2+) pocket. Gln241 lines the substrate pocket. Residue Asp269 participates in Mg(2+) binding. Substrate is bound at residue 313–315 (ESQ). The ATP site is built by Asp494 and Gly531. Asn532 is a binding site for Mg(2+). Ser534 is a binding site for substrate.

This sequence belongs to the FGAMS family. In terms of assembly, monomer. Part of the FGAM synthase complex composed of 1 PurL, 1 PurQ and 2 PurS subunits.

It is found in the cytoplasm. The enzyme catalyses N(2)-formyl-N(1)-(5-phospho-beta-D-ribosyl)glycinamide + L-glutamine + ATP + H2O = 2-formamido-N(1)-(5-O-phospho-beta-D-ribosyl)acetamidine + L-glutamate + ADP + phosphate + H(+). It functions in the pathway purine metabolism; IMP biosynthesis via de novo pathway; 5-amino-1-(5-phospho-D-ribosyl)imidazole from N(2)-formyl-N(1)-(5-phospho-D-ribosyl)glycinamide: step 1/2. Its function is as follows. Part of the phosphoribosylformylglycinamidine synthase complex involved in the purines biosynthetic pathway. Catalyzes the ATP-dependent conversion of formylglycinamide ribonucleotide (FGAR) and glutamine to yield formylglycinamidine ribonucleotide (FGAM) and glutamate. The FGAM synthase complex is composed of three subunits. PurQ produces an ammonia molecule by converting glutamine to glutamate. PurL transfers the ammonia molecule to FGAR to form FGAM in an ATP-dependent manner. PurS interacts with PurQ and PurL and is thought to assist in the transfer of the ammonia molecule from PurQ to PurL. The chain is Phosphoribosylformylglycinamidine synthase subunit PurL from Sinorhizobium fredii (strain HH103).